Here is a 574-residue protein sequence, read N- to C-terminus: Egalitarian protein homolog (574 aa).

The tract at residues 259–278 (LNEDGSENGSDEGEETNNNG) is disordered. Acidic residues predominate over residues 262–273 (DGSENGSDEGEE). Residues 312 to 414 (NMEKKVVGLD…SLLQHEKFNK (103 aa)) form the 3'-5' exonuclease domain.

In terms of assembly, component of a dynein-regulating complex composed of at least bicd-1, dlc-1 and egal-1.

The protein resides in the nucleus envelope. Part of a complex with bicd-1 and dlc-1, which is recruited to the nuclear envelope by unc-83, where in turn, it recruits dynein to the nuclear surface and regulates nuclear migration in hypodermal precursor cells. In Caenorhabditis elegans, this protein is Egalitarian protein homolog.